We begin with the raw amino-acid sequence, 199 residues long: 3-isopropylmalate dehydratase small subunit (199 aa).

It belongs to the LeuD family. LeuD type 1 subfamily. As to quaternary structure, heterodimer of LeuC and LeuD.

It carries out the reaction (2R,3S)-3-isopropylmalate = (2S)-2-isopropylmalate. It functions in the pathway amino-acid biosynthesis; L-leucine biosynthesis; L-leucine from 3-methyl-2-oxobutanoate: step 2/4. Functionally, catalyzes the isomerization between 2-isopropylmalate and 3-isopropylmalate, via the formation of 2-isopropylmaleate. The protein is 3-isopropylmalate dehydratase small subunit of Leifsonia xyli subsp. xyli (strain CTCB07).